The primary structure comprises 284 residues: Tropomyosin (284 aa).

The interval 1 to 41 is disordered; that stretch reads MDAIKKKMQAMKLEKDNAVDRAETAEQQSRDAALRAEKAEE. Residues 1 to 284 adopt a coiled-coil conformation; sequence MDAIKKKMQA…DQTFSELTGY (284 aa). Positions 12–41 are enriched in basic and acidic residues; the sequence is KLEKDNAVDRAETAEQQSRDAALRAEKAEE.

Belongs to the tropomyosin family. As to quaternary structure, homodimer.

Its function is as follows. Tropomyosin, in association with the troponin complex, plays a central role in the calcium dependent regulation of muscle contraction. The sequence is that of Tropomyosin from Haemaphysalis longicornis (Bush tick).